The chain runs to 111 residues: uncharacterized protein (111 aa).

2 helical membrane-spanning segments follow: residues 7–29 and 49–71; these read LYSS…RALY and PSLL…SINL.

It is found in the membrane. This is an uncharacterized protein from Saccharomyces cerevisiae (strain ATCC 204508 / S288c) (Baker's yeast).